Here is a 240-residue protein sequence, read N- to C-terminus: Methylthioribulose-1-phosphate dehydratase (240 aa).

Residue Cys-99 coordinates substrate. Residues His-116 and His-118 each contribute to the Zn(2+) site. Glu-145 acts as the Proton donor/acceptor in catalysis. His-201 contacts Zn(2+).

The protein belongs to the aldolase class II family. MtnB subfamily. Zn(2+) serves as cofactor.

The protein resides in the cytoplasm. The catalysed reaction is 5-(methylsulfanyl)-D-ribulose 1-phosphate = 5-methylsulfanyl-2,3-dioxopentyl phosphate + H2O. The protein operates within amino-acid biosynthesis; L-methionine biosynthesis via salvage pathway; L-methionine from S-methyl-5-thio-alpha-D-ribose 1-phosphate: step 2/6. Catalyzes the dehydration of methylthioribulose-1-phosphate (MTRu-1-P) into 2,3-diketo-5-methylthiopentyl-1-phosphate (DK-MTP-1-P). This chain is Methylthioribulose-1-phosphate dehydratase, found in Ajellomyces capsulatus (strain H143) (Darling's disease fungus).